Consider the following 445-residue polypeptide: mRNA cleavage and polyadenylation factor CLP1 (445 aa).

ATP-binding positions include D33, K72, and 133 to 138 (QTGKTS).

It belongs to the Clp1 family. Clp1 subfamily. Component of the cleavage factor IA (CF IA) complex, which is a heterohexameric complex with 2:2:1:1 stoichiometry of RNA14, RNA15, PCF11 and CLP1. It contains 2 copies of an RNA14-RNA15 dimer and 1 copy of CLP1-PCF11. The complex interacts with the cleavage factor HRB1/CF IB to form the cleavage factor I (CF I) complex, and binds to RNA. Interacts directly with PCF11. Interacts with the CPF components CFT1, PTA1, PFS2, YSH1 and SSU72.

The protein resides in the nucleus. Functionally, component of the cleavage factor IA (CF IA) complex, which is involved in the endonucleolytic cleavage during polyadenylation-dependent pre-mRNA 3'-end formation. Associates with HRB1/CF IB to form the cleavage factor I (CF I) complex. CF I is required for correct positioning of a larger protein complex, the cleavage and polyadenylation factor (CPF) complex, which contains the catalytic subunits executing mRNA cleavage and polyadenylation. CLP1 mediates interactions between CF IA and CPF factors. CLP1 is also involved in maintaining the CF IA interaction with the C-terminal domain of RNA Pol II largest subunit via PCF11, which links pre-mRNA 3'-end processing to transcription termination. The polypeptide is mRNA cleavage and polyadenylation factor CLP1 (Saccharomyces cerevisiae (strain YJM789) (Baker's yeast)).